The chain runs to 496 residues: Ganglioside-induced differentiation-associated protein 2 (496 aa).

The tract at residues 25–48 (EEGEDVPDGGRKDVPDGGSHSPFP) is disordered. The 181-residue stretch at 44 to 224 (HSPFPYRKDI…TYRRLLPLYF (181 aa)) folds into the Macro domain. The CRAL-TRIO domain maps to 329-483 (DLSDIAALKA…FVLDYDAREN (155 aa)).

It belongs to the GDAP2 family.

The polypeptide is Ganglioside-induced differentiation-associated protein 2 (Xenopus laevis (African clawed frog)).